The chain runs to 327 residues: Gonadotropin-releasing hormone receptor (327 aa).

Residues 1–38 (MANNASLEQDQNHCSAINNSIPLTQGKLPTLTLSGKIR) are Extracellular-facing. Residues Asn-4 and Asn-18 are each glycosylated (N-linked (GlcNAc...) asparagine). The helical transmembrane segment at 39–58 (VTVTFFLFLLSTAFNASFLV) threads the bilayer. The Cytoplasmic portion of the chain corresponds to 59 to 77 (KLQRWTQKRKKGKKLSRMK). A helical membrane pass occupies residues 78-97 (VLLKHLTLANLLETLIVMPL). Topologically, residues 98–115 (DGMWNITVQWYAGEFLCK) are extracellular. An N-linked (GlcNAc...) asparagine glycan is attached at Asn-102. The cysteines at positions 114 and 195 are disulfide-linked. Residues 116 to 137 (VLSYLKLFSMYAPAFMMVVISL) traverse the membrane as a helical segment. Residues 138–164 (DRSLAVTQPLAVQSKSKLERSMTSLAW) lie on the Cytoplasmic side of the membrane. Residues 165–184 (ILSIVFAGPQLYIFRMIYLA) form a helical membrane-spanning segment. The Extracellular portion of the chain corresponds to 185–211 (DGSGPAVFSQCVTHCSFPQWWHEAFYN). A helical transmembrane segment spans residues 212 to 231 (FFTFSCLFIIPLLIMLICNA). Residues 232 to 280 (KIIFALTRVLHQDPRKLQLNQSKNNIPRARLRTLKMTVAFGTSFVICWT) lie on the Cytoplasmic side of the membrane. Residues 281 to 299 (PYYVLGIWYWFDPEMLNRV) traverse the membrane as a helical segment. Topologically, residues 300 to 305 (SEPVNH) are extracellular. Residues 306-325 (FFFLFAFLNPCFDPLIYGYF) form a helical membrane-spanning segment. Topologically, residues 326-327 (SL) are cytoplasmic.

The protein belongs to the G-protein coupled receptor 1 family.

It localises to the cell membrane. In terms of biological role, receptor for gonadotropin releasing hormone (GnRH) that mediates the action of GnRH to stimulate the secretion of the gonadotropic hormones luteinizing hormone (LH) and follicle-stimulating hormone (FSH). This receptor mediates its action by association with G-proteins that activate a phosphatidylinositol-calcium second messenger system. In Rattus norvegicus (Rat), this protein is Gonadotropin-releasing hormone receptor (Gnrhr).